The sequence spans 465 residues: Phosphatidate cytidylyltransferase (465 aa).

Positions 1-60 (MSDQPPAENADVRQRRAPESPVTERLRAPARDDARPTSDESDMEGILQDEDSDAGSKNKE) are disordered. Basic and acidic residues predominate over residues 10 to 38 (ADVRQRRAPESPVTERLRAPARDDARPTS). A compositionally biased stretch (acidic residues) spans 39 to 53 (DESDMEGILQDEDSD). Helical transmembrane passes span 95–117 (WVVR…TRGA), 121–143 (MFLV…LAVY), 158–178 (FLLT…WGIV), 187–207 (FLVA…FVSF), 214–234 (GYYM…LLIV), 239–259 (FIIQ…AMII), 288–308 (GFIG…LALY), and 367–387 (IALS…ASGF).

This sequence belongs to the CDS family.

The protein localises to the membrane. It catalyses the reaction a 1,2-diacyl-sn-glycero-3-phosphate + CTP + H(+) = a CDP-1,2-diacyl-sn-glycerol + diphosphate. It functions in the pathway phospholipid metabolism; CDP-diacylglycerol biosynthesis; CDP-diacylglycerol from sn-glycerol 3-phosphate: step 3/3. Functionally, provides CDP-diacylglycerol, an important precursor for the synthesis of phosphatidylinositol (PtdIns). This Caenorhabditis elegans protein is Phosphatidate cytidylyltransferase (cdgs-1).